Consider the following 500-residue polypeptide: Hepatic triacylglycerol lipase (500 aa).

The signal sequence occupies residues 1-21 (MENPLCVSIFLFYCILIQSSA). The interval 23–44 (GQSLGPESFGRRSRAAETNKTP) is disordered. N-linked (GlcNAc...) asparagine glycosylation is found at Asn-67 and Asn-78. The active-site Nucleophile is the Ser-168. Asp-194 serves as the catalytic Charge relay system. The segment at 254-277 (CHFLELYKHFAKHGLNAITRTVKC) is essential for determining substrate specificity. Catalysis depends on His-279, which acts as the Charge relay system. The 135-residue stretch at 353 to 487 (YHYQFKIRFI…HPAREKTFVR (135 aa)) folds into the PLAT domain. N-linked (GlcNAc...) asparagine glycosylation is found at Asn-363 and Asn-398.

It belongs to the AB hydrolase superfamily. Lipase family. As to quaternary structure, homodimer.

It is found in the secreted. The catalysed reaction is a triacylglycerol + H2O = a diacylglycerol + a fatty acid + H(+). It carries out the reaction a 1-acyl-sn-glycero-3-phosphocholine + H2O = sn-glycerol 3-phosphocholine + a fatty acid + H(+). It catalyses the reaction a 1,2-diacyl-sn-glycero-3-phosphocholine + H2O = a 2-acyl-sn-glycero-3-phosphocholine + a fatty acid + H(+). The enzyme catalyses 1,2,3-tri-(9Z-octadecenoyl)-glycerol + H2O = di-(9Z)-octadecenoylglycerol + (9Z)-octadecenoate + H(+). The catalysed reaction is 1,2-di-(9Z-octadecenoyl)-sn-glycero-3-phosphocholine + H2O = (9Z-octadecenoyl)-sn-glycero-3-phosphocholine + (9Z)-octadecenoate + H(+). It carries out the reaction 1,2,3-tributanoylglycerol + H2O = dibutanoylglycerol + butanoate + H(+). It catalyses the reaction 1,2-dihexadecanoyl-sn-glycero-3-phosphocholine + H2O = hexadecanoyl-sn-glycero-3-phosphocholine + hexadecanoate + H(+). The enzyme catalyses 1,2-di-(9Z-octadecenoyl)-sn-glycerol + H2O = 2-(9Z-octadecenoyl)-glycerol + (9Z)-octadecenoate + H(+). The catalysed reaction is 1,2,3-tri-(9Z-octadecenoyl)-glycerol + H2O = 2,3-di-(9Z)-octadecenoyl-sn-glycerol + (9Z)-octadecenoate + H(+). It carries out the reaction 1-(9Z-octadecenoyl)-sn-glycero-3-phospho-L-serine + H2O = sn-glycero-3-phospho-L-serine + (9Z)-octadecenoate + H(+). It catalyses the reaction 1-hexadecanoyl-sn-glycero-3-phosphocholine + H2O = sn-glycerol 3-phosphocholine + hexadecanoate + H(+). The enzyme catalyses 1,3-di-(9Z-octadecenoyl)-glycerol + H2O = 3-(9Z-octadecenoyl)-sn-glycerol + (9Z)-octadecenoate + H(+). Functionally, catalyzes the hydrolysis of triglycerides and phospholipids present in circulating plasma lipoproteins, including chylomicrons, intermediate density lipoproteins (IDL), low density lipoproteins (LDL) of large size and high density lipoproteins (HDL), releasing free fatty acids (FFA) and smaller lipoprotein particles. Also exhibits lysophospholipase activity. Can hydrolyze both neutral lipid and phospholipid substrates but shows a greater binding affinity for neutral lipid substrates than phospholipid substrates. In native LDL, preferentially hydrolyzes the phosphatidylcholine species containing polyunsaturated fatty acids at sn-2 position. This chain is Hepatic triacylglycerol lipase (LIPC), found in Bos taurus (Bovine).